We begin with the raw amino-acid sequence, 106 residues long: Large ribosomal subunit protein uL24 (106 aa).

It belongs to the universal ribosomal protein uL24 family. Part of the 50S ribosomal subunit.

Its function is as follows. One of two assembly initiator proteins, it binds directly to the 5'-end of the 23S rRNA, where it nucleates assembly of the 50S subunit. In terms of biological role, one of the proteins that surrounds the polypeptide exit tunnel on the outside of the subunit. This Bordetella bronchiseptica (strain ATCC BAA-588 / NCTC 13252 / RB50) (Alcaligenes bronchisepticus) protein is Large ribosomal subunit protein uL24.